We begin with the raw amino-acid sequence, 121 residues long: NADH-quinone oxidoreductase subunit A 1 (121 aa).

The next 3 membrane-spanning stretches (helical) occupy residues 6–26 (FPIFVVISIAIILAVVLLSIG), 62–82 (LVAMIFIVFDIEVIFMYPWAV), and 90–110 (FYGLIPMVTFVLILLAGYYYI).

Belongs to the complex I subunit 3 family. In terms of assembly, NDH-1 is composed of 14 different subunits. Subunits NuoA, H, J, K, L, M, N constitute the membrane sector of the complex.

The protein resides in the cell inner membrane. The enzyme catalyses a quinone + NADH + 5 H(+)(in) = a quinol + NAD(+) + 4 H(+)(out). Functionally, NDH-1 shuttles electrons from NADH, via FMN and iron-sulfur (Fe-S) centers, to quinones in the respiratory chain. The immediate electron acceptor for the enzyme in this species is believed to be a menaquinone. Couples the redox reaction to proton translocation (for every two electrons transferred, four hydrogen ions are translocated across the cytoplasmic membrane), and thus conserves the redox energy in a proton gradient. The sequence is that of NADH-quinone oxidoreductase subunit A 1 from Chloroherpeton thalassium (strain ATCC 35110 / GB-78).